The primary structure comprises 145 residues: Probable disulfide formation protein (145 aa).

The helical transmembrane segment at 9 to 28 (ENLLLLIWVQAFLALAGSLF) threads the bilayer. C38 and C41 are oxidised to a cystine. 2 helical membrane passes run 43–62 (YQRILMYPLVLIYGVAAIKK) and 69–86 (PGLFMSGIGLLVSTYHYL). An intrachain disulfide couples C100 to C106. A helical transmembrane segment spans residues 115-137 (GFISIPFMAGVAFLIIFVLHLLI).

This sequence belongs to the DsbB family. BdbC subfamily.

Its subcellular location is the cell membrane. In terms of biological role, required for disulfide bond formation in some proteins. This Oceanobacillus iheyensis (strain DSM 14371 / CIP 107618 / JCM 11309 / KCTC 3954 / HTE831) protein is Probable disulfide formation protein.